Reading from the N-terminus, the 409-residue chain is Dihydrolipoyllysine-residue succinyltransferase component of 2-oxoglutarate dehydrogenase complex (409 aa).

The Lipoyl-binding domain occupies 2–77 (AIEIKAPTFP…LSNELLGKLN (76 aa)). K43 is modified (N6-lipoyllysine). The Peripheral subunit-binding (PSBD) domain occupies 112-149 (ILSPAARKLAEEAGIDPNSIAGTGKGGRVTKEDVVAAV). Catalysis depends on residues H380 and D384.

It belongs to the 2-oxoacid dehydrogenase family. As to quaternary structure, forms a 24-polypeptide structural core with octahedral symmetry. Part of the 2-oxoglutarate dehydrogenase (OGDH) complex composed of E1 (2-oxoglutarate dehydrogenase), E2 (dihydrolipoamide succinyltransferase) and E3 (dihydrolipoamide dehydrogenase); the complex contains multiple copies of the three enzymatic components (E1, E2 and E3). (R)-lipoate is required as a cofactor.

It catalyses the reaction N(6)-[(R)-dihydrolipoyl]-L-lysyl-[protein] + succinyl-CoA = N(6)-[(R)-S(8)-succinyldihydrolipoyl]-L-lysyl-[protein] + CoA. It participates in amino-acid degradation; L-lysine degradation via saccharopine pathway; glutaryl-CoA from L-lysine: step 6/6. In terms of biological role, E2 component of the 2-oxoglutarate dehydrogenase (OGDH) complex which catalyzes the second step in the conversion of 2-oxoglutarate to succinyl-CoA and CO(2). In Pseudomonas aeruginosa (strain ATCC 15692 / DSM 22644 / CIP 104116 / JCM 14847 / LMG 12228 / 1C / PRS 101 / PAO1), this protein is Dihydrolipoyllysine-residue succinyltransferase component of 2-oxoglutarate dehydrogenase complex (sucB).